Reading from the N-terminus, the 502-residue chain is Membrane-bound lytic murein transglycosylase F (502 aa).

Positions 1–33 (MSRFISTFRSSSAQLSIVLAVILATGCSQPTTL) are cleaved as a signal peptide. Residues 34–264 (QEIREEGVLH…QLAERFYGHL (231 aa)) form a non-LT domain region. An LT domain region spans residues 265 to 502 (DRLNYVGART…PELRLIPPTL (238 aa)). The active site involves glutamate 311. The interval 457-502 (PSASGLEDQLAWLGDNEAGPEAPAKESQPDLRADLPPELRLIPPTL) is disordered. Basic and acidic residues predominate over residues 479 to 493 (PAKESQPDLRADLPP).

In the N-terminal section; belongs to the bacterial solute-binding protein 3 family. The protein in the C-terminal section; belongs to the transglycosylase Slt family.

The protein resides in the cell outer membrane. The enzyme catalyses Exolytic cleavage of the (1-&gt;4)-beta-glycosidic linkage between N-acetylmuramic acid (MurNAc) and N-acetylglucosamine (GlcNAc) residues in peptidoglycan, from either the reducing or the non-reducing ends of the peptidoglycan chains, with concomitant formation of a 1,6-anhydrobond in the MurNAc residue.. Its function is as follows. Murein-degrading enzyme that degrades murein glycan strands and insoluble, high-molecular weight murein sacculi, with the concomitant formation of a 1,6-anhydromuramoyl product. Lytic transglycosylases (LTs) play an integral role in the metabolism of the peptidoglycan (PG) sacculus. Their lytic action creates space within the PG sacculus to allow for its expansion as well as for the insertion of various structures such as secretion systems and flagella. The chain is Membrane-bound lytic murein transglycosylase F from Marinobacter nauticus (strain ATCC 700491 / DSM 11845 / VT8) (Marinobacter aquaeolei).